Here is a 147-residue protein sequence, read N- to C-terminus: Hemoglobin subunit beta (147 aa).

Positions 3-147 (HWTAEEKQII…VAHALARKYH (145 aa)) constitute a Globin domain. The heme b site is built by H64 and H93.

As to quaternary structure, heterotetramer of two alpha (or alpha-D) and two beta chains. As to expression, red blood cells.

Involved in oxygen transport from the lung to the various peripheral tissues. The beta chain is a component of adult hemoglobin A and D. This is Hemoglobin subunit beta from Aythya fuligula (Tufted duck).